A 627-amino-acid chain; its full sequence is tRNA uridine 5-carboxymethylaminomethyl modification enzyme MnmG (627 aa).

FAD is bound by residues 16–21, Val128, and Ser183; that span reads GAGHAG. 277 to 291 contributes to the NAD(+) binding site; the sequence is GPRYCPSIEDKIVRF. FAD is bound at residue Gln374.

This sequence belongs to the MnmG family. In terms of assembly, homodimer. Heterotetramer of two MnmE and two MnmG subunits. FAD is required as a cofactor.

The protein localises to the cytoplasm. Its function is as follows. NAD-binding protein involved in the addition of a carboxymethylaminomethyl (cmnm) group at the wobble position (U34) of certain tRNAs, forming tRNA-cmnm(5)s(2)U34. This chain is tRNA uridine 5-carboxymethylaminomethyl modification enzyme MnmG, found in Finegoldia magna (strain ATCC 29328 / DSM 20472 / WAL 2508) (Peptostreptococcus magnus).